Reading from the N-terminus, the 308-residue chain is Methionyl-tRNA formyltransferase (308 aa).

A (6S)-5,6,7,8-tetrahydrofolate-binding site is contributed by 109-112; it reads SLLP.

This sequence belongs to the Fmt family.

It catalyses the reaction L-methionyl-tRNA(fMet) + (6R)-10-formyltetrahydrofolate = N-formyl-L-methionyl-tRNA(fMet) + (6S)-5,6,7,8-tetrahydrofolate + H(+). Functionally, attaches a formyl group to the free amino group of methionyl-tRNA(fMet). The formyl group appears to play a dual role in the initiator identity of N-formylmethionyl-tRNA by promoting its recognition by IF2 and preventing the misappropriation of this tRNA by the elongation apparatus. The sequence is that of Methionyl-tRNA formyltransferase from Methylococcus capsulatus (strain ATCC 33009 / NCIMB 11132 / Bath).